A 387-amino-acid chain; its full sequence is Putative ankyrin repeat protein RBE_0984 (387 aa).

5 ANK repeats span residues 50-79 (YGNT…DKDI), 88-119 (HRET…AINV), 123-154 (RKHT…VINV), 159-188 (HKDS…KENI), and 210-239 (VCKM…LKGE). Coiled-coil stretches lie at residues 251–278 (FEDI…KKCE) and 311–352 (SISA…ALEK).

The sequence is that of Putative ankyrin repeat protein RBE_0984 from Rickettsia bellii (strain RML369-C).